Consider the following 232-residue polypeptide: 5'-methylthioadenosine/S-adenosylhomocysteine nucleosidase (232 aa).

The active-site Proton acceptor is the E12. Residues G78, I152, and M173–E174 contribute to the substrate site. The active-site Proton donor is the D197.

It belongs to the PNP/UDP phosphorylase family. MtnN subfamily. In terms of assembly, homodimer.

The catalysed reaction is S-adenosyl-L-homocysteine + H2O = S-(5-deoxy-D-ribos-5-yl)-L-homocysteine + adenine. It catalyses the reaction S-methyl-5'-thioadenosine + H2O = 5-(methylsulfanyl)-D-ribose + adenine. It carries out the reaction 5'-deoxyadenosine + H2O = 5-deoxy-D-ribose + adenine. It participates in amino-acid biosynthesis; L-methionine biosynthesis via salvage pathway; S-methyl-5-thio-alpha-D-ribose 1-phosphate from S-methyl-5'-thioadenosine (hydrolase route): step 1/2. In terms of biological role, catalyzes the irreversible cleavage of the glycosidic bond in both 5'-methylthioadenosine (MTA) and S-adenosylhomocysteine (SAH/AdoHcy) to adenine and the corresponding thioribose, 5'-methylthioribose and S-ribosylhomocysteine, respectively. Also cleaves 5'-deoxyadenosine, a toxic by-product of radical S-adenosylmethionine (SAM) enzymes, into 5-deoxyribose and adenine. Thus, is required for in vivo function of the radical SAM enzymes biotin synthase and lipoic acid synthase, that are inhibited by 5'-deoxyadenosine accumulation. The polypeptide is 5'-methylthioadenosine/S-adenosylhomocysteine nucleosidase (Shigella boydii serotype 4 (strain Sb227)).